The chain runs to 403 residues: Ribosomal RNA large subunit methyltransferase I (403 aa).

The region spanning 9–88 is the PUA domain; it reads YPRLVLSKGR…ESIDIAFFTR (80 aa).

Belongs to the methyltransferase superfamily. RlmI family.

It is found in the cytoplasm. The catalysed reaction is cytidine(1962) in 23S rRNA + S-adenosyl-L-methionine = 5-methylcytidine(1962) in 23S rRNA + S-adenosyl-L-homocysteine + H(+). In terms of biological role, specifically methylates the cytosine at position 1962 (m5C1962) of 23S rRNA. In Salmonella choleraesuis (strain SC-B67), this protein is Ribosomal RNA large subunit methyltransferase I.